The chain runs to 337 residues: Phosphatidate cytidylyltransferase, mitochondrial (337 aa).

This sequence belongs to the TAM41 family. Requires Mg(2+) as cofactor. As to expression, brain and liver.

The protein localises to the mitochondrion inner membrane. The catalysed reaction is a 1,2-diacyl-sn-glycero-3-phosphate + CTP + H(+) = a CDP-1,2-diacyl-sn-glycerol + diphosphate. It functions in the pathway phospholipid metabolism; CDP-diacylglycerol biosynthesis; CDP-diacylglycerol from sn-glycerol 3-phosphate: step 3/3. Its function is as follows. Catalyzes the conversion of phosphatidic acid (PA) to CDP-diacylglycerol (CDP-DAG), an essential intermediate in the synthesis of phosphatidylglycerol, cardiolipin and phosphatidylinositol. The sequence is that of Phosphatidate cytidylyltransferase, mitochondrial (Tamm41) from Rattus norvegicus (Rat).